Reading from the N-terminus, the 962-residue chain is Glycine dehydrogenase (decarboxylating) (962 aa).

The residue at position 709 (Lys-709) is an N6-(pyridoxal phosphate)lysine.

The protein belongs to the GcvP family. The glycine cleavage system is composed of four proteins: P, T, L and H. Pyridoxal 5'-phosphate serves as cofactor.

The catalysed reaction is N(6)-[(R)-lipoyl]-L-lysyl-[glycine-cleavage complex H protein] + glycine + H(+) = N(6)-[(R)-S(8)-aminomethyldihydrolipoyl]-L-lysyl-[glycine-cleavage complex H protein] + CO2. Its function is as follows. The glycine cleavage system catalyzes the degradation of glycine. The P protein binds the alpha-amino group of glycine through its pyridoxal phosphate cofactor; CO(2) is released and the remaining methylamine moiety is then transferred to the lipoamide cofactor of the H protein. The protein is Glycine dehydrogenase (decarboxylating) of Shewanella sp. (strain ANA-3).